A 312-amino-acid chain; its full sequence is MLPAAGLLWWVGALGALYAAVRGALGLLGALRVWGIGAGRAALGPGLGAWAVVTGATDGIGKAYAKELAKRGMKVALISRSKEKLDQVAGEITEQYGVETKVIVADFGEREDIYDRIRAGLEGLEIGVLVNNVGISYSYPEYFIDVPDLDKTIDKMININIMSVCKMTRLVLPGMLERSKGVILNISSAAGMYPTPLLTLYSASKAFVDYFSRGLHAEYKSKGIIVQSVMPYYVATKMSKISKPSFDKPTPETYVRAAIGTVGLQSQTNGCLPHAFMGWVFSILPTSTVMNLLMKTNKQIRARFLKKKMKEK.

A run of 3 helical transmembrane segments spans residues 33-53 (VWGIGAGRAALGPGLGAWAVV), 181-201 (GVILNISSAAGMYPTPLLTLY), and 274-294 (HAFMGWVFSILPTSTVMNLLM). Residue 48–77 (GAWAVVTGATDGIGKAYAKELAKRGMKVAL) coordinates NADP(+). Residue Ser-188 participates in substrate binding. The active-site Proton acceptor is the Tyr-201.

Belongs to the short-chain dehydrogenases/reductases (SDR) family. 17-beta-HSD 3 subfamily. In terms of tissue distribution, brain.

It localises to the endoplasmic reticulum membrane. It carries out the reaction a very-long-chain (3R)-3-hydroxyacyl-CoA + NADP(+) = a very-long-chain 3-oxoacyl-CoA + NADPH + H(+). The enzyme catalyses 17beta-estradiol + NAD(+) = estrone + NADH + H(+). The catalysed reaction is 17beta-estradiol + NADP(+) = estrone + NADPH + H(+). It catalyses the reaction 3-oxooctadecanoyl-CoA + NADPH + H(+) = (3R)-hydroxyoctadecanoyl-CoA + NADP(+). It carries out the reaction (7Z,10Z,13Z,16Z)-3-oxodocosatetraenoyl-CoA + NADPH + H(+) = (3R)-hydroxy-(7Z,10Z,13Z,16Z)-docosatetraenoyl-CoA + NADP(+). The enzyme catalyses 3-oxo-(7Z,10Z,13Z,16Z,19Z)-docosapentaenoyl-CoA + NADPH + H(+) = (3R)-hydroxy-(7Z,10Z,13Z,16Z,19Z)-docosapentaenoyl-CoA + NADP(+). The catalysed reaction is (8Z,11Z,14Z)-3-oxoeicosatrienoyl-CoA + NADPH + H(+) = (3R)-hydroxy-(8Z,11Z,14Z)-eicosatrienoyl-CoA + NADP(+). It functions in the pathway lipid metabolism; fatty acid biosynthesis. Its pathway is steroid biosynthesis; estrogen biosynthesis. In terms of biological role, catalyzes the second of the four reactions of the long-chain fatty acids elongation cycle. This endoplasmic reticulum-bound enzymatic process, allows the addition of two carbons to the chain of long- and very long-chain fatty acids/VLCFAs per cycle. This enzyme has a 3-ketoacyl-CoA reductase activity, reducing 3-ketoacyl-CoA to 3-hydroxyacyl-CoA, within each cycle of fatty acid elongation. Thereby, it may participate in the production of VLCFAs of different chain lengths that are involved in multiple biological processes as precursors of membrane lipids and lipid mediators. May also catalyze the transformation of estrone (E1) into estradiol (E2) and play a role in estrogen formation. This Anas platyrhynchos (Mallard) protein is Very-long-chain 3-oxoacyl-CoA reductase (HSD17B12).